The following is a 669-amino-acid chain: Putative heme-binding protein rrnAC3100 (669 aa).

H181 is a heme binding site. Disordered stretches follow at residues 260-351 (RVPT…PDVS) and 451-477 (LGGSLGEGVEGSETADDSDAQAAESSQ). In terms of domain architecture, ABM spans 579–667 (GTMGMFYTVK…VLADRPRHVF (89 aa)).

In the N-terminal section; belongs to the ChdC family.

The sequence is that of Putative heme-binding protein rrnAC3100 from Haloarcula marismortui (strain ATCC 43049 / DSM 3752 / JCM 8966 / VKM B-1809) (Halobacterium marismortui).